A 123-amino-acid chain; its full sequence is Small ribosomal subunit protein uS12 (123 aa).

The segment at 1–25 is disordered; the sequence is MPTINQLIRKRRKSSLARKKSPALQ. The span at 8–21 shows a compositional bias: basic residues; sequence IRKRRKSSLARKKS. Residue aspartate 89 is modified to 3-methylthioaspartic acid.

It belongs to the universal ribosomal protein uS12 family. Part of the 30S ribosomal subunit. Contacts proteins S8 and S17. May interact with IF1 in the 30S initiation complex.

With S4 and S5 plays an important role in translational accuracy. In terms of biological role, interacts with and stabilizes bases of the 16S rRNA that are involved in tRNA selection in the A site and with the mRNA backbone. Located at the interface of the 30S and 50S subunits, it traverses the body of the 30S subunit contacting proteins on the other side and probably holding the rRNA structure together. The combined cluster of proteins S8, S12 and S17 appears to hold together the shoulder and platform of the 30S subunit. This is Small ribosomal subunit protein uS12 from Chlamydia pneumoniae (Chlamydophila pneumoniae).